Consider the following 150-residue polypeptide: Aspartate 1-decarboxylase (150 aa).

The active-site Schiff-base intermediate with substrate; via pyruvic acid is the Ser25. Ser25 carries the post-translational modification Pyruvic acid (Ser). Thr57 lines the substrate pocket. Catalysis depends on Tyr58, which acts as the Proton donor. 73–75 (GAA) is a binding site for substrate.

This sequence belongs to the PanD family. Heterooctamer of four alpha and four beta subunits. It depends on pyruvate as a cofactor. Post-translationally, is synthesized initially as an inactive proenzyme, which is activated by self-cleavage at a specific serine bond to produce a beta-subunit with a hydroxyl group at its C-terminus and an alpha-subunit with a pyruvoyl group at its N-terminus.

Its subcellular location is the cytoplasm. The enzyme catalyses L-aspartate + H(+) = beta-alanine + CO2. Its pathway is cofactor biosynthesis; (R)-pantothenate biosynthesis; beta-alanine from L-aspartate: step 1/1. Catalyzes the pyruvoyl-dependent decarboxylation of aspartate to produce beta-alanine. The polypeptide is Aspartate 1-decarboxylase (Kocuria rhizophila (strain ATCC 9341 / DSM 348 / NBRC 103217 / DC2201)).